Reading from the N-terminus, the 142-residue chain is uncharacterized protein (142 aa).

Transmembrane regions (helical) follow at residues 12–29 and 44–66; these read NAILRPISDIFVLIYGLL and IYGQLSLLLWGTKFLATILGVTA.

Its subcellular location is the cell membrane. This is an uncharacterized protein from Archaeoglobus fulgidus (strain ATCC 49558 / DSM 4304 / JCM 9628 / NBRC 100126 / VC-16).